Reading from the N-terminus, the 429-residue chain is UDP-N-acetylglucosamine 1-carboxyvinyltransferase (429 aa).

22–23 (KN) contacts phosphoenolpyruvate. Residue R102 coordinates UDP-N-acetyl-alpha-D-glucosamine. C126 (proton donor) is an active-site residue. At C126 the chain carries 2-(S-cysteinyl)pyruvic acid O-phosphothioketal. Residues 171-174 (KVSV), D316, and I338 contribute to the UDP-N-acetyl-alpha-D-glucosamine site.

It belongs to the EPSP synthase family. MurA subfamily.

The protein localises to the cytoplasm. It carries out the reaction phosphoenolpyruvate + UDP-N-acetyl-alpha-D-glucosamine = UDP-N-acetyl-3-O-(1-carboxyvinyl)-alpha-D-glucosamine + phosphate. The protein operates within cell wall biogenesis; peptidoglycan biosynthesis. Its function is as follows. Cell wall formation. Adds enolpyruvyl to UDP-N-acetylglucosamine. In Xanthobacter autotrophicus (strain ATCC BAA-1158 / Py2), this protein is UDP-N-acetylglucosamine 1-carboxyvinyltransferase.